A 354-amino-acid chain; its full sequence is S-adenosylmethionine:tRNA ribosyltransferase-isomerase (354 aa).

Belongs to the QueA family. In terms of assembly, monomer.

It is found in the cytoplasm. The enzyme catalyses 7-aminomethyl-7-carbaguanosine(34) in tRNA + S-adenosyl-L-methionine = epoxyqueuosine(34) in tRNA + adenine + L-methionine + 2 H(+). It functions in the pathway tRNA modification; tRNA-queuosine biosynthesis. Its function is as follows. Transfers and isomerizes the ribose moiety from AdoMet to the 7-aminomethyl group of 7-deazaguanine (preQ1-tRNA) to give epoxyqueuosine (oQ-tRNA). This Dichelobacter nodosus (strain VCS1703A) protein is S-adenosylmethionine:tRNA ribosyltransferase-isomerase.